The following is a 62-amino-acid chain: Small, acid-soluble spore protein H 1 (62 aa).

Belongs to the SspH family.

The protein localises to the spore core. The chain is Small, acid-soluble spore protein H 1 from Clostridium botulinum (strain ATCC 19397 / Type A).